A 669-amino-acid polypeptide reads, in one-letter code: DNA ligase (669 aa).

NAD(+)-binding positions include 33–37, 82–83, and Glu114; these read DAEYD and SL. Lys116 functions as the N6-AMP-lysine intermediate in the catalytic mechanism. Residues Arg137, Glu174, Lys291, and Lys315 each contribute to the NAD(+) site. Zn(2+) is bound by residues Cys409, Cys412, Cys427, and Cys433. One can recognise a BRCT domain in the interval 593-669; that stretch reads EIPQPLAGKV…QTEQDLLALL (77 aa).

The protein belongs to the NAD-dependent DNA ligase family. LigA subfamily. It depends on Mg(2+) as a cofactor. Mn(2+) serves as cofactor.

It catalyses the reaction NAD(+) + (deoxyribonucleotide)n-3'-hydroxyl + 5'-phospho-(deoxyribonucleotide)m = (deoxyribonucleotide)n+m + AMP + beta-nicotinamide D-nucleotide.. Its function is as follows. DNA ligase that catalyzes the formation of phosphodiester linkages between 5'-phosphoryl and 3'-hydroxyl groups in double-stranded DNA using NAD as a coenzyme and as the energy source for the reaction. It is essential for DNA replication and repair of damaged DNA. The sequence is that of DNA ligase from Vibrio vulnificus (strain CMCP6).